Here is a 638-residue protein sequence, read N- to C-terminus: UvrABC system protein C (638 aa).

A GIY-YIG domain is found at 20 to 97 (ECAGVYQMFD…IKKFQPKFNI (78 aa)). One can recognise a UVR domain in the interval 209–244 (KELQENLSKKMEELSSHMYFEEAAEIRDRIKALSYV).

This sequence belongs to the UvrC family. As to quaternary structure, interacts with UvrB in an incision complex.

The protein resides in the cytoplasm. Its function is as follows. The UvrABC repair system catalyzes the recognition and processing of DNA lesions. UvrC both incises the 5' and 3' sides of the lesion. The N-terminal half is responsible for the 3' incision and the C-terminal half is responsible for the 5' incision. The polypeptide is UvrABC system protein C (Rickettsia canadensis (strain McKiel)).